A 229-amino-acid polypeptide reads, in one-letter code: Small ribosomal subunit protein uS3 (229 aa).

The KH type-2 domain occupies 18 to 87 (IDEYLAKQYY…NPQITITNVE (70 aa)).

It belongs to the universal ribosomal protein uS3 family. In terms of assembly, part of the 30S ribosomal subunit.

Its function is as follows. Binds the lower part of the 30S subunit head. This chain is Small ribosomal subunit protein uS3, found in Saccharolobus solfataricus (strain ATCC 35092 / DSM 1617 / JCM 11322 / P2) (Sulfolobus solfataricus).